The primary structure comprises 130 residues: MNIIEQIDQEQMATLTGGKTIPDFAPGDTLQVNVKVVEGTRERLQAYEGVCIARAGGGINENFTVRKISYGEGVERVFPLYSPLVDSIKVVRKGRVRRAKLYYLRGLRGKAARITEKKQDKTRSQETGAA.

The protein belongs to the bacterial ribosomal protein bL19 family.

This protein is located at the 30S-50S ribosomal subunit interface and may play a role in the structure and function of the aminoacyl-tRNA binding site. The polypeptide is Large ribosomal subunit protein bL19 (Parvibaculum lavamentivorans (strain DS-1 / DSM 13023 / NCIMB 13966)).